The sequence spans 798 residues: Integrin beta-1-A (798 aa).

The first 21 residues, 1-21 (MAHYPVFTVGLLTCLVLCINA), serve as a signal peptide directing secretion. Residues 22–727 (QQGGTECLKA…VKEPECPSGP (706 aa)) lie on the Extracellular side of the membrane. Positions 27 to 77 (ECLKANAKSCGECIQAGPNCGWCTKVDFLQEGEPTSARCDDLAALKSKGCP) constitute a PSI domain. Cystine bridges form between Cys-28–Cys-46, Cys-36–Cys-464, Cys-39–Cys-65, Cys-49–Cys-76, Cys-206–Cys-212, Cys-260–Cys-300, Cys-400–Cys-414, Cys-434–Cys-462, Cys-466–Cys-486, Cys-477–Cys-489, Cys-491–Cys-500, Cys-502–Cys-533, Cys-516–Cys-531, Cys-525–Cys-536, Cys-538–Cys-553, Cys-555–Cys-576, Cys-560–Cys-574, Cys-568–Cys-579, Cys-581–Cys-590, Cys-592–Cys-615, Cys-599–Cys-613, Cys-607–Cys-618, Cys-620–Cys-630, Cys-633–Cys-636, Cys-640–Cys-691, Cys-646–Cys-665, Cys-649–Cys-661, and Cys-699–Cys-723. A disordered region spans residues 76–106 (CPEDDIQNPRGRKQKLKDIPITSKGKGERMD). N-linked (GlcNAc...) asparagine glycans are attached at residues Asn-109 and Asn-131. The 239-residue stretch at 139–377 (DYPIDLYYLM…QLIIDSYNSL (239 aa)) folds into the VWFA domain. Mg(2+) is bound by residues Ser-151 and Ser-153. 4 residues coordinate Ca(2+): Ser-153, Asp-156, Asp-157, and Glu-188. Asn-211 and Asn-223 each carry an N-linked (GlcNAc...) asparagine glycan. Ca(2+) is bound by residues Asn-243, Asp-245, Pro-247, and Glu-248. Position 248 (Glu-248) interacts with Mg(2+). N-linked (GlcNAc...) asparagine glycosylation is found at Asn-268 and Asn-362. N-linked (GlcNAc...) asparagine glycosylation is present at Asn-416. I-EGF domains are found at residues 466 to 501 (CQDKGTPNSPECHFGNGTFECGACRCNDGRIGKECE), 502 to 554 (CSTD…KYCE), 555 to 591 (CDNFNCDRSNGLICGGKGICKCRVCECFPNYSGSACD), and 592 to 631 (CSEDTSTCMAKNGQICNGRGICDCGRCKCTDPKFQGPTCE). A glycan (N-linked (GlcNAc...) asparagine) is linked at Asn-481. Residue Asn-520 is glycosylated (N-linked (GlcNAc...) asparagine). An N-linked (GlcNAc...) asparagine glycan is attached at Asn-584. Asn-669 is a glycosylation site (N-linked (GlcNAc...) asparagine). A helical transmembrane segment spans residues 728–751 (DIIPIVAGVVAGIVLIGLALLLIW). Topologically, residues 752–798 (KLLMIIHDRREFAKFEKEKMNAKWDTGENPIYKSAVTTVVNPKYEGK) are cytoplasmic. At Tyr-783 the chain carries Phosphotyrosine.

It belongs to the integrin beta chain family. Heterodimer of an alpha and a beta subunit.

It is found in the cell membrane. The protein localises to the cell projection. It localises to the invadopodium membrane. The protein resides in the ruffle membrane. Its subcellular location is the melanosome. It is found in the cleavage furrow. The protein localises to the lamellipodium. It localises to the ruffle. Its function is as follows. Beta integrins associate with alpha subunits to form receptor complexes that recognize the sequence R-G-D in a wide array of ligands. May be involved in osteoblast compaction. May play role in myoblast differentiation and fusion during skeletal myogenesis. The protein is Integrin beta-1-A (itgb1-a) of Xenopus laevis (African clawed frog).